The primary structure comprises 319 residues: Protein sprouty homolog 1 (319 aa).

Met-1 carries the post-translational modification N-acetylmethionine. Residues Thr-54–Gln-157 form a disordered region. Basic and acidic residues predominate over residues Pro-69–Glu-79. A compositionally biased stretch (low complexity) spans Ser-112 to Ser-131. The region spanning Gln-183 to Cys-295 is the SPR domain.

This sequence belongs to the sprouty family. As to quaternary structure, forms heterodimers with SPRY2. Interacts with TESK1. Interacts with CAV1 (via C-terminus).

Its subcellular location is the cytoplasm. It is found in the membrane. In terms of biological role, inhibits fibroblast growth factor (FGF)-induced retinal lens fiber differentiation, probably by inhibiting FGF-mediated phosphorylation of ERK1/2. Inhibits TGFB-induced epithelial-to-mesenchymal transition in lens epithelial cells. The protein is Protein sprouty homolog 1 (SPRY1) of Bos taurus (Bovine).